Reading from the N-terminus, the 1071-residue chain is Carbamoyl phosphate synthase large chain (1071 aa).

The carboxyphosphate synthetic domain stretch occupies residues Met1 to Glu403. The ATP site is built by Arg129, Arg169, Gly175, Gly176, Gln208, Val210, Glu215, Gly241, Val242, His243, Gln285, and Glu299. An ATP-grasp 1 domain is found at Lys133 to Val328. The Mg(2+) site is built by Gln285, Glu299, and Asn301. Residues Gln285, Glu299, and Asn301 each coordinate Mn(2+). Positions Thr404–Ser548 are oligomerization domain. The tract at residues Arg549 to Gly930 is carbamoyl phosphate synthetic domain. In terms of domain architecture, ATP-grasp 2 spans Gln673–Ala864. Residues Arg709, Phe748, Leu750, Glu755, Gly780, Ile781, His782, Ser783, Gln823, and Glu835 each contribute to the ATP site. Residues Gln823, Glu835, and Asn837 each contribute to the Mg(2+) site. The Mn(2+) site is built by Gln823, Glu835, and Asn837. The MGS-like domain maps to Glu931 to Asn1071. The interval Glu931–Asn1071 is allosteric domain.

It belongs to the CarB family. As to quaternary structure, composed of two chains; the small (or glutamine) chain promotes the hydrolysis of glutamine to ammonia, which is used by the large (or ammonia) chain to synthesize carbamoyl phosphate. Tetramer of heterodimers (alpha,beta)4. Mg(2+) serves as cofactor. The cofactor is Mn(2+).

It catalyses the reaction hydrogencarbonate + L-glutamine + 2 ATP + H2O = carbamoyl phosphate + L-glutamate + 2 ADP + phosphate + 2 H(+). It carries out the reaction hydrogencarbonate + NH4(+) + 2 ATP = carbamoyl phosphate + 2 ADP + phosphate + 2 H(+). It functions in the pathway amino-acid biosynthesis; L-arginine biosynthesis; carbamoyl phosphate from bicarbonate: step 1/1. Its pathway is pyrimidine metabolism; UMP biosynthesis via de novo pathway; (S)-dihydroorotate from bicarbonate: step 1/3. Large subunit of the glutamine-dependent carbamoyl phosphate synthetase (CPSase). CPSase catalyzes the formation of carbamoyl phosphate from the ammonia moiety of glutamine, carbonate, and phosphate donated by ATP, constituting the first step of 2 biosynthetic pathways, one leading to arginine and/or urea and the other to pyrimidine nucleotides. The large subunit (synthetase) binds the substrates ammonia (free or transferred from glutamine from the small subunit), hydrogencarbonate and ATP and carries out an ATP-coupled ligase reaction, activating hydrogencarbonate by forming carboxy phosphate which reacts with ammonia to form carbamoyl phosphate. In Neisseria meningitidis serogroup B (strain ATCC BAA-335 / MC58), this protein is Carbamoyl phosphate synthase large chain.